The following is a 314-amino-acid chain: MKQHPKISLIGSGNIGGTLAHLISLRELGNIVLFDVTEGVPQGKALDLMQAVTIAGSDIKIKGTNDYKDIKGSDAIIITAGLPRKPGMSRDDLISINTGIMKTVAANVKKYAPDAFVIVITNPLDVMVYVMLKESGLPHNKVIGMAGVLDSSRFNLFLAEEFKVSVSNVNSMVLGGHGDAMVPLARYSTISGVPIPDLIKMGLSSNENIEKIIDRTRNGGGEIVALLKTGSAYYAPAASAIEMLESYLKDKRQILTCAAYLQGEYGVHDLYVGVPIMIGKEGVLKVIELQLTTEEKALFDKSVEGVKKLIETIK.

Residues 11–16 (GSGNIG) and aspartate 35 each bind NAD(+). Substrate contacts are provided by arginine 84 and arginine 90. Residues asparagine 97 and 120-122 (ITN) each bind NAD(+). 2 residues coordinate substrate: asparagine 122 and arginine 153. The active-site Proton acceptor is the histidine 177.

It belongs to the LDH/MDH superfamily. MDH type 3 family.

It catalyses the reaction (S)-malate + NAD(+) = oxaloacetate + NADH + H(+). Catalyzes the reversible oxidation of malate to oxaloacetate. This Rickettsia rickettsii (strain Iowa) protein is Malate dehydrogenase.